The primary structure comprises 265 residues: Phosphonoacetaldehyde hydrolase (265 aa).

The active-site Nucleophile is Asp-10. Positions 10 and 12 each coordinate Mg(2+). Lys-51 acts as the Schiff-base intermediate with substrate in catalysis. Asp-184 lines the Mg(2+) pocket.

This sequence belongs to the HAD-like hydrolase superfamily. PhnX family. As to quaternary structure, homodimer. Mg(2+) is required as a cofactor.

The catalysed reaction is phosphonoacetaldehyde + H2O = acetaldehyde + phosphate + H(+). Involved in phosphonate degradation. This Latilactobacillus sakei subsp. sakei (strain 23K) (Lactobacillus sakei subsp. sakei) protein is Phosphonoacetaldehyde hydrolase.